We begin with the raw amino-acid sequence, 89 residues long: UPF0223 protein BPUM_1362 (89 aa).

The protein belongs to the UPF0223 family.

The chain is UPF0223 protein BPUM_1362 from Bacillus pumilus (strain SAFR-032).